Reading from the N-terminus, the 432-residue chain is 3-phosphoshikimate 1-carboxyvinyltransferase (432 aa).

3-phosphoshikimate-binding residues include Lys23, Ser24, and Arg28. Lys23 serves as a coordination point for phosphoenolpyruvate. Phosphoenolpyruvate contacts are provided by Gly95 and Arg123. Residues Ser167, Gln169, Asp317, and Lys344 each coordinate 3-phosphoshikimate. Gln169 is a phosphoenolpyruvate binding site. The active-site Proton acceptor is the Asp317. Residues Arg348 and Arg390 each contribute to the phosphoenolpyruvate site.

This sequence belongs to the EPSP synthase family. In terms of assembly, monomer.

Its subcellular location is the cytoplasm. The catalysed reaction is 3-phosphoshikimate + phosphoenolpyruvate = 5-O-(1-carboxyvinyl)-3-phosphoshikimate + phosphate. It participates in metabolic intermediate biosynthesis; chorismate biosynthesis; chorismate from D-erythrose 4-phosphate and phosphoenolpyruvate: step 6/7. Its function is as follows. Catalyzes the transfer of the enolpyruvyl moiety of phosphoenolpyruvate (PEP) to the 5-hydroxyl of shikimate-3-phosphate (S3P) to produce enolpyruvyl shikimate-3-phosphate and inorganic phosphate. This chain is 3-phosphoshikimate 1-carboxyvinyltransferase, found in Staphylococcus aureus (strain MRSA252).